The chain runs to 110 residues: UPF0060 membrane protein Pcryo_1341 (110 aa).

4 consecutive transmembrane segments (helical) span residues 7-27 (VGLF…PYLW), 33-53 (SIWL…LLTL), 63-83 (AAYG…VDGI), and 87-107 (TWDI…MFAP).

The protein belongs to the UPF0060 family.

Its subcellular location is the cell inner membrane. This chain is UPF0060 membrane protein Pcryo_1341, found in Psychrobacter cryohalolentis (strain ATCC BAA-1226 / DSM 17306 / VKM B-2378 / K5).